Consider the following 422-residue polypeptide: MILIKNGRVMDPKSQRDQVADVLIDGKQIVKIASAIECQEAQVIDASGLIVAPGLVDIHVHFREPGQTHKEDIHTGALAAAAGGVTTVVMMANTNPVISDVETLQEVLASAAKEKIHIYTNASVTQAFNGKDVTDFKALLEAGAVSFSDDGIPLESSKVLKEAFDLANANQTFISLHEEDPQLNGVLGFNEGIAEEHFHFCGATGVAEYSMIARDVMIAYDRQAHVHIQHLSKAESVQVVAFAQQLGAKVTAEVSPQHFSTTEDLLLTAGTSAKMNPPLRTQRDRLAVIEGLKSGVITVIATDHAPHHKDEKAVDDMTKAPSGMTGLETSLSLGLTHLVEPGHLTLMSLLEKMTLNPALLYGFDAGYLAENGPADLVIFADKQERLITENFASKASNSPFIGNKLKGVVKYTIADGEVVYPN.

Residues His-59 and His-61 each contribute to the Zn(2+) site. Residues His-61 to Arg-63 and Asn-93 each bind substrate. Zn(2+) is bound by residues Asp-150, His-177, and His-230. Asn-276 is a binding site for substrate. A Zn(2+)-binding site is contributed by Asp-303. The active site involves Asp-303. His-307 provides a ligand contact to substrate.

Belongs to the metallo-dependent hydrolases superfamily. DHOase family. Class I DHOase subfamily. The cofactor is Zn(2+).

It carries out the reaction (S)-dihydroorotate + H2O = N-carbamoyl-L-aspartate + H(+). It participates in pyrimidine metabolism; UMP biosynthesis via de novo pathway; (S)-dihydroorotate from bicarbonate: step 3/3. Catalyzes the reversible cyclization of carbamoyl aspartate to dihydroorotate. The chain is Dihydroorotase from Streptococcus pyogenes serotype M3 (strain ATCC BAA-595 / MGAS315).